Reading from the N-terminus, the 342-residue chain is S-adenosylmethionine:tRNA ribosyltransferase-isomerase (342 aa).

Belongs to the QueA family. Monomer.

The protein resides in the cytoplasm. It catalyses the reaction 7-aminomethyl-7-carbaguanosine(34) in tRNA + S-adenosyl-L-methionine = epoxyqueuosine(34) in tRNA + adenine + L-methionine + 2 H(+). It participates in tRNA modification; tRNA-queuosine biosynthesis. Functionally, transfers and isomerizes the ribose moiety from AdoMet to the 7-aminomethyl group of 7-deazaguanine (preQ1-tRNA) to give epoxyqueuosine (oQ-tRNA). The sequence is that of S-adenosylmethionine:tRNA ribosyltransferase-isomerase from Geobacillus kaustophilus (strain HTA426).